The primary structure comprises 187 residues: Ribosome maturation factor RimM (187 aa).

The 74-residue stretch at 96-169 (EDEFFYADLE…KLVIDPTAAG (74 aa)) folds into the PRC barrel domain.

This sequence belongs to the RimM family. In terms of assembly, binds ribosomal protein uS19.

The protein resides in the cytoplasm. In terms of biological role, an accessory protein needed during the final step in the assembly of 30S ribosomal subunit, possibly for assembly of the head region. Essential for efficient processing of 16S rRNA. May be needed both before and after RbfA during the maturation of 16S rRNA. It has affinity for free ribosomal 30S subunits but not for 70S ribosomes. The sequence is that of Ribosome maturation factor RimM from Rhizobium meliloti (strain 1021) (Ensifer meliloti).